The following is a 695-amino-acid chain: MGKSSEAWCIVLFSVFASFSAEPTMHGEILSPNYPQAYPNEMEKTWDIEVPEGFGVRLYFTHLDMELSENCEYDSVQIISGGVEEGRLCGQRTSKNANSPIVEEFQIPYNKLQVIFRSDFSNEERFTGFAAYYAAIDVNECTDFTDVPCSHFCNNFIGGYFCSCPPEYFLHDDMRNCGVNCSGNVFTALIGEISSPNYPNPYPENSRCEYQILLEEGFQVVVTIQREDFDVEPADSQGNCQDSLLFAAKNRQFGPFCGNGFPGPLTIETHSNTLDIVFQTDLTEQKKGWKLRYHGDPIPCPKEITANSVWAPEKAKYVFKDVVKISCVDGFEAVEGNVGSTFFYSTCQSNGQWSNSRLRCQPVDCGIPEPIQNGKVDDPENTLFGSVIHYSCEEPYYYMEHAEHGGEYRCAANGSWVNDELGIELPKCVPVCGVPTEPFRIQQRIFGGFPAKIQSFPWQVFFEFPRAGGALIGEHWVLTAAHVVEGNSDPSMYVGSTSVRMENLANVQKLTTDRVIIHPGWKPGDDLSTRTNFDNDIALVRLKDPVKMGPTVSPICLPGTSSEYEPSEGDLGLISGWGRTERRNIVIQLRGAKLPVTSLEKCRQVKEENPKARADDYVFTSNMICAGEKGVDSCQGDSGGAFALPVPNVRDPKFYVAGLVSWGKKCGTYGIYTKVKNYKDWILQTMQENSVPSQD.

Residues 1–21 (MGKSSEAWCIVLFSVFASFSA) form the signal peptide. Positions 22–136 (EPTMHGEILS…TGFAAYYAAI (115 aa)) constitute a CUB 1 domain. 4 disulfides stabilise this stretch: C71–C89, C141–C153, C149–C162, and C164–C177. Residues 137–178 (DVNECTDFTDVPCSHFCNNFIGGYFCSCPPEYFLHDDMRNCG) enclose the EGF-like; calcium-binding domain. N155 bears the (3R)-3-hydroxyasparagine mark. Residue N180 is glycosylated (N-linked (GlcNAc...) asparagine). Intrachain disulfides connect C181–C208, C240–C257, C300–C347, C327–C360, C365–C410, and C392–C428. One can recognise a CUB 2 domain in the interval 181–296 (CSGNVFTALI…KGWKLRYHGD (116 aa)). Sushi domains follow at residues 298 to 362 (IPCP…RCQP) and 363 to 430 (VDCG…KCVP). N413 carries an N-linked (GlcNAc...) asparagine glycan. The 243-residue stretch at 445 to 687 (IFGGFPAKIQ…YKDWILQTMQ (243 aa)) folds into the Peptidase S1 domain. Active-site charge relay system residues include H482 and D536. 2 cysteine pairs are disulfide-bonded: C602-C625 and C634-C666. The Charge relay system role is filled by S638.

The protein belongs to the peptidase S1 family. As to quaternary structure, heterodimer, consisting of heavy and light chains with disulfide bonds. The heavy chain is expected to be a regulatory subunit and the light chain contains the catalytic site. Post-translationally, the iron and 2-oxoglutarate dependent 3-hydroxylation of aspartate and asparagine is (R) stereospecific within EGF domains.

It is found in the secreted. Its subcellular location is the extracellular space. It localises to the extracellular matrix. Its function is as follows. Capable of degrading extracellular matrix proteins. CASP degrades type I and IV collagen and fibronectin in the presence of calcium. The sequence is that of Calcium-dependent serine proteinase from Mesocricetus auratus (Golden hamster).